The sequence spans 320 residues: GDSL esterase/lipase At3g43570 (320 aa).

The first 19 residues, 1-19 (MKIQIIWLTLVLIVVEANA), serve as a signal peptide directing secretion. N-linked (GlcNAc...) asparagine glycosylation is present at Asn25. Ser37 acts as the Nucleophile in catalysis. An N-linked (GlcNAc...) asparagine glycan is attached at Asn287. Residues Asp295 and His298 contribute to the active site.

The protein belongs to the 'GDSL' lipolytic enzyme family.

Its subcellular location is the secreted. The polypeptide is GDSL esterase/lipase At3g43570 (Arabidopsis thaliana (Mouse-ear cress)).